Reading from the N-terminus, the 700-residue chain is Polyribonucleotide nucleotidyltransferase (700 aa).

Mg(2+)-binding residues include D487 and D493. Residues 554–613 (PRLLTIKIHPDKIRDVIGKGGSTIQAITKDTGTQIDIQDDGTIVIASVNNAAAREAKRRI) form the KH domain. Residues 623–691 (GRIYEGKVAK…KQGRIRLSIK (69 aa)) form the S1 motif domain.

Belongs to the polyribonucleotide nucleotidyltransferase family. As to quaternary structure, component of the RNA degradosome, which is a multiprotein complex involved in RNA processing and mRNA degradation. Requires Mg(2+) as cofactor.

The protein resides in the cytoplasm. The catalysed reaction is RNA(n+1) + phosphate = RNA(n) + a ribonucleoside 5'-diphosphate. In terms of biological role, involved in mRNA degradation. Catalyzes the phosphorolysis of single-stranded polyribonucleotides processively in the 3'- to 5'-direction. This Xylella fastidiosa (strain M12) protein is Polyribonucleotide nucleotidyltransferase.